Consider the following 395-residue polypeptide: Mitogen-activated protein kinase 6 (395 aa).

Positions 1–35 (MDGGSGQPAADTEMTEAPGGFPAAAPSPQMPGIEN) are disordered. Low complexity predominate over residues 17–27 (APGGFPAAAPS). In terms of domain architecture, Protein kinase spans 63–348 (KPPIMPIGKG…VLDALAHPYL (286 aa)). Residues 69-77 (IGKGAYGIV) and Lys-92 contribute to the ATP site. Asp-189 (proton acceptor) is an active-site residue. The residue at position 221 (Thr-221) is a Phosphothreonine. The TXY signature appears at 221 to 223 (TEY). A Phosphotyrosine modification is found at Tyr-223. Phosphothreonine is present on Thr-226.

Belongs to the protein kinase superfamily. CMGC Ser/Thr protein kinase family. MAP kinase subfamily. In terms of assembly, interacts with MEKK1, MKK1 and MKK2. May form a ternary complex with MEKK1 and MKK1 or MKK2. Interacts with NDPK2, AP2C1, MKP1 and PTP1. Interacts with DSPTP1B/MKP2, especially during HR-like responses triggered by fungal elicitors. Interacts with MKK4, MKK5 and MKK6. Binds to LIP5. Interacts with VQ4 and IKU1/VQ14. Interacts with RACK1A, RACK1B and RACK1C. Interacts with PTP1. Interacts with FLZ9. Binds to BASL and YDA. Dually phosphorylated on Thr-221 and Tyr-223, which activates the enzyme. Dephosphorylated by DSPTP1B/MKP2.

Its subcellular location is the cytoplasm. It is found in the nucleus. The protein localises to the cell cortex. It carries out the reaction L-seryl-[protein] + ATP = O-phospho-L-seryl-[protein] + ADP + H(+). It catalyses the reaction L-threonyl-[protein] + ATP = O-phospho-L-threonyl-[protein] + ADP + H(+). Its activity is regulated as follows. Activated by threonine and tyrosine phosphorylation. Activated by the MAP kinase kinases MKK2, MKK3, MKK4, MKK5, MKK7 and MKK9. Activated in response to touch, wounding, low temperature, low humidity, salt stress, hydrogen peroxide, ozone, ACC (an ethylene precursor), jasmonic acid (JA), mastoparan and UVC. Activated in response to elicitors: oligogalacturonides, hexameric chitin fragments, fungal xylanase, and the bacterial flagellin and harpin. Activated upon Pseudomonas syringae pv. tomato DC3000 infection. Repressed by the protein phosphatase 2C AP2C1 and the protein-tyrosine-phosphatases MKP1 and PTP1. Repressed by DSPTP1B/MKP2-mediated dephosphorylation. Activated by polarized BASL. Triggered by MKKK20 in response to various abiotic stresses, including osmotic stress, cold and reactive oxygen species (ROS). Activated by MKK5 in response to abscisic acid (ABA). Its function is as follows. Mitogen-activated protein kinase (MAPK) which regulates abscisic acid (ABA) responses in a MAPKKK20-MKK5-MPK6 cascade involved in root growth (e.g. root cell division and elongation) and stomatal response. Involved in oxidative stress-mediated signaling cascade (such as ozone). Involved in the innate immune MAP kinase signaling cascade (MEKK1, MKK4/MKK5 and MPK3/MPK6) downstream of bacterial flagellin receptor FLS2. May be involved in hypersensitive response (HR)-mediated signaling cascade by modulating LIP5 phosphorylation and subsequent multivesicular bodies (MVBs) trafficking. May phosphorylate regulators of WRKY transcription factors. Phosphorylates 1-aminocyclopropane-1-carboxylic acid synthases (ACS2 and ACS6) and may be involved in the regulation of bacterial elicitor flagellin-induced ethylene production. Regulates locally gene-mediated and basal resistance response to certain pathogens. May be involved in the cold and salinity stress-mediated MAP kinase signaling cascade (MEKK1, MKK1/MKK2 and MPK4/MPK6). MKK1-MPK6 module mediates abscisic acid (ABA)-dependent CAT1 expression with H(2)O(2) production and response to drought and salt stress. MKK1-MPK6 module is also involved in sugar signaling during the process of seed germination. MKK3-MPK6 module plays an important role in the jasmonate signal transduction pathway through the negative regulation of MYC2/JIN1 expression. MKK9-MPK3/MPK6 module phosphorylates and activates EIN3, leading to the promotion of EIN3-mediated transcription in ethylene signaling. MPK3/MPK6 cascade regulates camalexin synthesis through transcriptional regulation of the biosynthetic genes after pathogen infection. MKK9-MPK6 module positively regulates leaf senescence. YDA-MKK4/MKK5-MPK3/MPK6 module regulates stomatal cell fate before the guard mother cell (GMC) is specified. When activated, reinforces the feedback loop by phosphorylating BASL, and inhibits stomatal fate by phosphorylating SPCH. This MAPK cascade also functions downstream of the ER receptor in regulating coordinated local cell proliferation, which shapes the morphology of plant organs. The polypeptide is Mitogen-activated protein kinase 6 (Arabidopsis thaliana (Mouse-ear cress)).